A 401-amino-acid chain; its full sequence is Carboxybiotin decarboxylase (401 aa).

10 consecutive transmembrane segments (helical) span residues 20–40 (VISI…YFGF), 46–66 (PLIM…VLFL), 70–90 (VVGT…VNLM), 107–127 (LIAC…FILI), 131–151 (ASII…IIGI), 173–193 (MVLF…AIIA), 244–264 (LCLL…GIAI), 275–295 (LLET…LGAL), 306–326 (ISLI…GGVL), and 380–400 (VCGL…LFLL).

Its subcellular location is the cell membrane. The catalysed reaction is N(6)-carboxybiotinyl-L-lysyl-[protein] + n Na(+)(in) + H(+) = N(6)-biotinyl-L-lysyl-[protein] + n Na(+)(out) + CO2. In terms of biological role, beta subunit of the biotin-dependent malonate decarboxylase multienzyme complex (EC 7.2.4.4). Acts as an integral membrane-bound carboxybiotin protein decarboxylase by releasing the carboxyl group of the carboxylated biotin carrier MADF. The free energy of the decarboxylation reaction is used to pump Na(+) out of the cell. This chain is Carboxybiotin decarboxylase (madB), found in Malonomonas rubra.